The primary structure comprises 126 residues: Histone H2B 8 (126 aa).

A compositionally biased stretch (low complexity) spans 1 to 12 (MPEPAKSAPAPK). The segment at 1–35 (MPEPAKSAPAPKKGSKKAVTKTQKKGDKKRRKTRK) is disordered. 2 positions are modified to N6-acetyllysine: K6 and K13. The segment covering 13–34 (KGSKKAVTKTQKKGDKKRRKTR) has biased composition (basic residues). Position 15 is a phosphoserine (S15). N6-acetyllysine occurs at positions 16 and 21. S113 carries an O-linked (GlcNAc) serine glycan. K121 participates in a covalent cross-link: Glycyl lysine isopeptide (Lys-Gly) (interchain with G-Cter in ubiquitin).

Belongs to the histone H2B family. In terms of assembly, the nucleosome is a histone octamer containing two molecules each of H2A, H2B, H3 and H4 assembled in one H3-H4 heterotetramer and two H2A-H2B heterodimers. The octamer wraps approximately 147 bp of DNA. Post-translationally, monoubiquitination of Lys-121 by the BRE1 gives a specific tag for epigenetic transcriptional activation and is also prerequisite for histone H3 'Lys-4' and 'Lys-79' methylation. Phosphorylated on Ser-15 during apoptosis; which facilitates apoptotic chromatin condensation. In terms of processing, glcNAcylation at Ser-113 promotes monoubiquitination of Lys-121. It fluctuates in response to extracellular glucose, and associates with transcribed genes.

Its subcellular location is the nucleus. It localises to the chromosome. Core component of nucleosome. Nucleosomes wrap and compact DNA into chromatin, limiting DNA accessibility to the cellular machineries which require DNA as a template. Histones thereby play a central role in transcription regulation, DNA repair, DNA replication and chromosomal stability. DNA accessibility is regulated via a complex set of post-translational modifications of histones, also called histone code, and nucleosome remodeling. This Gallus gallus (Chicken) protein is Histone H2B 8 (H2B-VIII).